Reading from the N-terminus, the 61-residue chain is Small ribosomal subunit protein uS14B (61 aa).

Residues Cys-24, Cys-27, Cys-40, and Cys-43 each contribute to the Zn(2+) site.

It belongs to the universal ribosomal protein uS14 family. Zinc-binding uS14 subfamily. In terms of assembly, part of the 30S ribosomal subunit. Contacts proteins S3 and S10. Zn(2+) serves as cofactor.

In terms of biological role, binds 16S rRNA, required for the assembly of 30S particles and may also be responsible for determining the conformation of the 16S rRNA at the A site. The sequence is that of Small ribosomal subunit protein uS14B from Limosilactobacillus reuteri (strain DSM 20016) (Lactobacillus reuteri).